The primary structure comprises 876 residues: Valine--tRNA ligase (876 aa).

Residues 44–54 carry the 'HIGH' region motif; that stretch reads PNVTGKLHLGH. The short motif at 520–524 is the 'KMSKS' region element; sequence KMSKS. Residue lysine 523 coordinates ATP. Residues 805-876 are a coiled coil; it reads LEGLIDMDKE…VKSRIEQLKA (72 aa).

It belongs to the class-I aminoacyl-tRNA synthetase family. ValS type 1 subfamily. Monomer.

The protein localises to the cytoplasm. It catalyses the reaction tRNA(Val) + L-valine + ATP = L-valyl-tRNA(Val) + AMP + diphosphate. Catalyzes the attachment of valine to tRNA(Val). As ValRS can inadvertently accommodate and process structurally similar amino acids such as threonine, to avoid such errors, it has a 'posttransfer' editing activity that hydrolyzes mischarged Thr-tRNA(Val) in a tRNA-dependent manner. The chain is Valine--tRNA ligase from Staphylococcus epidermidis (strain ATCC 35984 / DSM 28319 / BCRC 17069 / CCUG 31568 / BM 3577 / RP62A).